We begin with the raw amino-acid sequence, 79 residues long: Cell division protein ZapB (79 aa).

Residues 3 to 79 are a coiled coil; it reads LEVFEKLEAK…QALLGRMEEV (77 aa). N6-acetyllysine is present on Lys-8. Residues 34–65 are disordered; that stretch reads NNSLSQEVQNAQHQREELERENNHLKEQQNGW. Residues 35–45 are compositionally biased toward polar residues; that stretch reads NSLSQEVQNAQ. The segment covering 46–60 has biased composition (basic and acidic residues); it reads HQREELERENNHLKE.

The protein belongs to the ZapB family. Homodimer. The ends of the coiled-coil dimer bind to each other, forming polymers. Interacts with FtsZ.

Its subcellular location is the cytoplasm. In terms of biological role, non-essential, abundant cell division factor that is required for proper Z-ring formation. It is recruited early to the divisome by direct interaction with FtsZ, stimulating Z-ring assembly and thereby promoting cell division earlier in the cell cycle. Its recruitment to the Z-ring requires functional FtsA or ZipA. The protein is Cell division protein ZapB of Shigella boydii serotype 18 (strain CDC 3083-94 / BS512).